Consider the following 231-residue polypeptide: 7-cyano-7-deazaguanine synthase (231 aa).

8-18 serves as a coordination point for ATP; the sequence is FSGGQDSTTCL. Zn(2+) is bound by residues cysteine 188, cysteine 197, cysteine 200, and cysteine 203.

Belongs to the QueC family. Zn(2+) is required as a cofactor.

The enzyme catalyses 7-carboxy-7-deazaguanine + NH4(+) + ATP = 7-cyano-7-deazaguanine + ADP + phosphate + H2O + H(+). It participates in purine metabolism; 7-cyano-7-deazaguanine biosynthesis. Catalyzes the ATP-dependent conversion of 7-carboxy-7-deazaguanine (CDG) to 7-cyano-7-deazaguanine (preQ(0)). This is 7-cyano-7-deazaguanine synthase from Salmonella arizonae (strain ATCC BAA-731 / CDC346-86 / RSK2980).